The primary structure comprises 600 residues: MSIKPPSISLLPVSPEQLVRLQSEIGDFSPTQLAWLSGYFWGMVNQQPQVQAVVPAVPAQETITLISASQTGNARRLAEQLREDLLAQKLNVNLFNAGDYKFKQIAQEKILIIIASTQGEGEPAEEAVALYKYLYSKKVPKLNDTVFAVFGLGDTSYERFCQAGKDFDNRLNELGAQRLLERVDGDVEYQQVADQWRKQLTGILKQRIPTETGTEITSAQDRSVNEVFSTSYTKQAPLTAALATCQKITGRGSDKDVRHIEIDLGDSGLRYQPGDALGVWFENDPELVDEVLNLLWLQGTEQVEVNGQKLSLREALISHVELTQNTSVIVEKYAVLAKDEKLLSLIADKQALQQYAHNKPIADMIREAASQPEAQQFIDLLRPLTPRLYSISSSQAEMENEVHLTVGVVRYEIDGRARTGGASGYLADRLQENSDIRIFIEHNDNFRLPADPRTPVIMIGPGTGIAPFRAFMQQREADGAEGKNWLFFGNPHFTEDFLYQVEWQRYVKDGLLTRIDLAWSRDQQHKIYVQDKLREQGEAVWCWIKEGAHLYVCGDANRMAKDVEHALLDIIAEHGGMDTEQADEFLSELRFERRYQRDVY.

Residues 63–201 form the Flavodoxin-like domain; sequence ITLISASQTG…VADQWRKQLT (139 aa). FMN-binding positions include 69-74, 116-119, and 152-161; these read SQTGNA, STQG, and LGDTSYERFC. One can recognise an FAD-binding FR-type domain in the interval 235–449; it reads QAPLTAALAT…IEHNDNFRLP (215 aa). Residues Thr-323, His-357, 387–390, 405–407, Tyr-411, and 420–423 contribute to the FAD site; these read RLYS, TVG, and GGAS. NADP(+) is bound by residues 520-521, 526-530, and Asp-562; these read SR and KIYVQ. FAD is bound at residue Tyr-600.

This sequence belongs to the NADPH-dependent sulphite reductase flavoprotein subunit CysJ family. It in the N-terminal section; belongs to the flavodoxin family. In the C-terminal section; belongs to the flavoprotein pyridine nucleotide cytochrome reductase family. As to quaternary structure, alpha(8)-beta(8). The alpha component is a flavoprotein, the beta component is a hemoprotein. Requires FAD as cofactor. The cofactor is FMN.

The catalysed reaction is hydrogen sulfide + 3 NADP(+) + 3 H2O = sulfite + 3 NADPH + 4 H(+). The protein operates within sulfur metabolism; hydrogen sulfide biosynthesis; hydrogen sulfide from sulfite (NADPH route): step 1/1. Its function is as follows. Component of the sulfite reductase complex that catalyzes the 6-electron reduction of sulfite to sulfide. This is one of several activities required for the biosynthesis of L-cysteine from sulfate. The flavoprotein component catalyzes the electron flow from NADPH -&gt; FAD -&gt; FMN to the hemoprotein component. The protein is Sulfite reductase [NADPH] flavoprotein alpha-component of Photorhabdus laumondii subsp. laumondii (strain DSM 15139 / CIP 105565 / TT01) (Photorhabdus luminescens subsp. laumondii).